We begin with the raw amino-acid sequence, 336 residues long: Holliday junction branch migration complex subunit RuvB (336 aa).

The large ATPase domain (RuvB-L) stretch occupies residues 4 to 184; sequence ADRLISASGG…FGIVQRLEFY (181 aa). ATP is bound by residues isoleucine 23, arginine 24, glycine 65, lysine 68, threonine 69, threonine 70, 131–133, arginine 174, tyrosine 184, and arginine 221; that span reads EDY. Residue threonine 69 coordinates Mg(2+). The interval 185–255 is small ATPAse domain (RuvB-S); the sequence is NVKDLTDIVA…IAARAMDMLD (71 aa). The interval 258–336 is head domain (RuvB-H); it reads NEGFDFMDRK…HFGLQRPDEG (79 aa). DNA is bound by residues arginine 313 and arginine 318.

Belongs to the RuvB family. Homohexamer. Forms an RuvA(8)-RuvB(12)-Holliday junction (HJ) complex. HJ DNA is sandwiched between 2 RuvA tetramers; dsDNA enters through RuvA and exits via RuvB. An RuvB hexamer assembles on each DNA strand where it exits the tetramer. Each RuvB hexamer is contacted by two RuvA subunits (via domain III) on 2 adjacent RuvB subunits; this complex drives branch migration. In the full resolvosome a probable DNA-RuvA(4)-RuvB(12)-RuvC(2) complex forms which resolves the HJ.

The protein resides in the cytoplasm. It carries out the reaction ATP + H2O = ADP + phosphate + H(+). Its function is as follows. The RuvA-RuvB-RuvC complex processes Holliday junction (HJ) DNA during genetic recombination and DNA repair, while the RuvA-RuvB complex plays an important role in the rescue of blocked DNA replication forks via replication fork reversal (RFR). RuvA specifically binds to HJ cruciform DNA, conferring on it an open structure. The RuvB hexamer acts as an ATP-dependent pump, pulling dsDNA into and through the RuvAB complex. RuvB forms 2 homohexamers on either side of HJ DNA bound by 1 or 2 RuvA tetramers; 4 subunits per hexamer contact DNA at a time. Coordinated motions by a converter formed by DNA-disengaged RuvB subunits stimulates ATP hydrolysis and nucleotide exchange. Immobilization of the converter enables RuvB to convert the ATP-contained energy into a lever motion, pulling 2 nucleotides of DNA out of the RuvA tetramer per ATP hydrolyzed, thus driving DNA branch migration. The RuvB motors rotate together with the DNA substrate, which together with the progressing nucleotide cycle form the mechanistic basis for DNA recombination by continuous HJ branch migration. Branch migration allows RuvC to scan DNA until it finds its consensus sequence, where it cleaves and resolves cruciform DNA. The sequence is that of Holliday junction branch migration complex subunit RuvB from Aeromonas hydrophila subsp. hydrophila (strain ATCC 7966 / DSM 30187 / BCRC 13018 / CCUG 14551 / JCM 1027 / KCTC 2358 / NCIMB 9240 / NCTC 8049).